We begin with the raw amino-acid sequence, 349 residues long: Lipoyl synthase (349 aa).

[4Fe-4S] cluster-binding residues include C55, C60, C66, C81, C85, C88, and S292. The 215-residue stretch at 67 to 281 (WESREATFLI…ADFARELGFG (215 aa)) folds into the Radical SAM core domain.

This sequence belongs to the radical SAM superfamily. Lipoyl synthase family. [4Fe-4S] cluster serves as cofactor.

The protein resides in the cytoplasm. The catalysed reaction is [[Fe-S] cluster scaffold protein carrying a second [4Fe-4S](2+) cluster] + N(6)-octanoyl-L-lysyl-[protein] + 2 oxidized [2Fe-2S]-[ferredoxin] + 2 S-adenosyl-L-methionine + 4 H(+) = [[Fe-S] cluster scaffold protein] + N(6)-[(R)-dihydrolipoyl]-L-lysyl-[protein] + 4 Fe(3+) + 2 hydrogen sulfide + 2 5'-deoxyadenosine + 2 L-methionine + 2 reduced [2Fe-2S]-[ferredoxin]. The protein operates within protein modification; protein lipoylation via endogenous pathway; protein N(6)-(lipoyl)lysine from octanoyl-[acyl-carrier-protein]: step 2/2. Its function is as follows. Catalyzes the radical-mediated insertion of two sulfur atoms into the C-6 and C-8 positions of the octanoyl moiety bound to the lipoyl domains of lipoate-dependent enzymes, thereby converting the octanoylated domains into lipoylated derivatives. This chain is Lipoyl synthase, found in Corynebacterium diphtheriae (strain ATCC 700971 / NCTC 13129 / Biotype gravis).